We begin with the raw amino-acid sequence, 554 residues long: Dihydroxy-acid dehydratase (554 aa).

D78 is a Mg(2+) binding site. C119 contacts [2Fe-2S] cluster. D120 and K121 together coordinate Mg(2+). Residue K121 is modified to N6-carboxylysine. C191 serves as a coordination point for [2Fe-2S] cluster. Residue E442 coordinates Mg(2+). The active-site Proton acceptor is S468.

It belongs to the IlvD/Edd family. In terms of assembly, homodimer. The cofactor is [2Fe-2S] cluster. Mg(2+) is required as a cofactor.

The catalysed reaction is (2R)-2,3-dihydroxy-3-methylbutanoate = 3-methyl-2-oxobutanoate + H2O. It carries out the reaction (2R,3R)-2,3-dihydroxy-3-methylpentanoate = (S)-3-methyl-2-oxopentanoate + H2O. It participates in amino-acid biosynthesis; L-isoleucine biosynthesis; L-isoleucine from 2-oxobutanoate: step 3/4. Its pathway is amino-acid biosynthesis; L-valine biosynthesis; L-valine from pyruvate: step 3/4. Its function is as follows. Functions in the biosynthesis of branched-chain amino acids. Catalyzes the dehydration of (2R,3R)-2,3-dihydroxy-3-methylpentanoate (2,3-dihydroxy-3-methylvalerate) into 2-oxo-3-methylpentanoate (2-oxo-3-methylvalerate) and of (2R)-2,3-dihydroxy-3-methylbutanoate (2,3-dihydroxyisovalerate) into 2-oxo-3-methylbutanoate (2-oxoisovalerate), the penultimate precursor to L-isoleucine and L-valine, respectively. The sequence is that of Dihydroxy-acid dehydratase from Acetivibrio thermocellus (strain ATCC 27405 / DSM 1237 / JCM 9322 / NBRC 103400 / NCIMB 10682 / NRRL B-4536 / VPI 7372) (Clostridium thermocellum).